The primary structure comprises 95 residues: Aspartyl/glutamyl-tRNA(Asn/Gln) amidotransferase subunit C (95 aa).

The protein belongs to the GatC family. In terms of assembly, heterotrimer of A, B and C subunits.

The enzyme catalyses L-glutamyl-tRNA(Gln) + L-glutamine + ATP + H2O = L-glutaminyl-tRNA(Gln) + L-glutamate + ADP + phosphate + H(+). The catalysed reaction is L-aspartyl-tRNA(Asn) + L-glutamine + ATP + H2O = L-asparaginyl-tRNA(Asn) + L-glutamate + ADP + phosphate + 2 H(+). Allows the formation of correctly charged Asn-tRNA(Asn) or Gln-tRNA(Gln) through the transamidation of misacylated Asp-tRNA(Asn) or Glu-tRNA(Gln) in organisms which lack either or both of asparaginyl-tRNA or glutaminyl-tRNA synthetases. The reaction takes place in the presence of glutamine and ATP through an activated phospho-Asp-tRNA(Asn) or phospho-Glu-tRNA(Gln). The polypeptide is Aspartyl/glutamyl-tRNA(Asn/Gln) amidotransferase subunit C (Pseudomonas putida (strain W619)).